A 358-amino-acid chain; its full sequence is Putative pyruvyl transferase EpsI (358 aa).

The protein belongs to the polysaccharide pyruvyl transferase family.

Its function is as follows. May be involved in the production of the exopolysaccharide (EPS) component of the extracellular matrix during biofilm formation. EPS is responsible for the adhesion of chains of cells into bundles. The chain is Putative pyruvyl transferase EpsI (epsI) from Bacillus subtilis (strain 168).